A 453-amino-acid polypeptide reads, in one-letter code: Ribosomal protein uS12 methylthiotransferase RimO (453 aa).

Residues 6 to 116 (PTVGIVSLGC…VLTAVHEAIA (111 aa)) form the MTTase N-terminal domain. [4Fe-4S] cluster is bound by residues Cys15, Cys51, Cys80, Cys148, Cys152, and Cys155. In terms of domain architecture, Radical SAM core spans 134-371 (LTPKHFAYLK…MQLQQQISAN (238 aa)). The TRAM domain maps to 374 to 440 (QAKIGKTIQV…EYDLWATPVG (67 aa)).

It belongs to the methylthiotransferase family. RimO subfamily. [4Fe-4S] cluster serves as cofactor.

Its subcellular location is the cytoplasm. The catalysed reaction is L-aspartate(89)-[ribosomal protein uS12]-hydrogen + (sulfur carrier)-SH + AH2 + 2 S-adenosyl-L-methionine = 3-methylsulfanyl-L-aspartate(89)-[ribosomal protein uS12]-hydrogen + (sulfur carrier)-H + 5'-deoxyadenosine + L-methionine + A + S-adenosyl-L-homocysteine + 2 H(+). Catalyzes the methylthiolation of an aspartic acid residue of ribosomal protein uS12. This is Ribosomal protein uS12 methylthiotransferase RimO from Hydrogenovibrio crunogenus (strain DSM 25203 / XCL-2) (Thiomicrospira crunogena).